We begin with the raw amino-acid sequence, 384 residues long: Ribosomal RNA large subunit methyltransferase G (384 aa).

The protein belongs to the methyltransferase superfamily. RlmG family.

The protein resides in the cytoplasm. The enzyme catalyses guanosine(1835) in 23S rRNA + S-adenosyl-L-methionine = N(2)-methylguanosine(1835) in 23S rRNA + S-adenosyl-L-homocysteine + H(+). Specifically methylates the guanine in position 1835 (m2G1835) of 23S rRNA. This chain is Ribosomal RNA large subunit methyltransferase G, found in Pseudoalteromonas atlantica (strain T6c / ATCC BAA-1087).